A 132-amino-acid polypeptide reads, in one-letter code: RING-H2 finger protein ATL39 (132 aa).

Residues 10 to 30 (TIVFAFASIGFIAFYIINYYI) traverse the membrane as a helical segment. The RING-type; atypical zinc-finger motif lies at 85–127 (CVVCLNEFKDDETLRLVPPCVHVFHADCVDIWLSHSSTCPICR).

The protein belongs to the RING-type zinc finger family. ATL subfamily.

It is found in the membrane. It catalyses the reaction S-ubiquitinyl-[E2 ubiquitin-conjugating enzyme]-L-cysteine + [acceptor protein]-L-lysine = [E2 ubiquitin-conjugating enzyme]-L-cysteine + N(6)-ubiquitinyl-[acceptor protein]-L-lysine.. It participates in protein modification; protein ubiquitination. The protein is RING-H2 finger protein ATL39 (ATL39) of Arabidopsis thaliana (Mouse-ear cress).